A 395-amino-acid polypeptide reads, in one-letter code: Putative 8-amino-7-oxononanoate synthase (395 aa).

Residue Arg-23 participates in substrate binding. 110-111 (GF) is a binding site for pyridoxal 5'-phosphate. His-135 is a binding site for substrate. Residues Ser-182, 207 to 210 (DEAH), and 239 to 242 (TFSK) each bind pyridoxal 5'-phosphate. Residue Lys-242 is modified to N6-(pyridoxal phosphate)lysine. Thr-356 is a substrate binding site.

The protein belongs to the class-II pyridoxal-phosphate-dependent aminotransferase family. BioF subfamily. In terms of assembly, homodimer. The cofactor is pyridoxal 5'-phosphate.

The catalysed reaction is 6-carboxyhexanoyl-[ACP] + L-alanine + H(+) = (8S)-8-amino-7-oxononanoate + holo-[ACP] + CO2. It participates in cofactor biosynthesis; biotin biosynthesis. Functionally, catalyzes the decarboxylative condensation of pimeloyl-[acyl-carrier protein] and L-alanine to produce 8-amino-7-oxononanoate (AON), [acyl-carrier protein], and carbon dioxide. In Bacillus thuringiensis subsp. konkukian (strain 97-27), this protein is Putative 8-amino-7-oxononanoate synthase (bioF).